Here is a 1827-residue protein sequence, read N- to C-terminus: Phenolphthiocerol/phthiocerol polyketide synthase subunit C (1827 aa).

Residues 35-461 (CEPVAVVGIG…GTNAHVVVEQ (427 aa)) enclose the Ketosynthase family 3 (KS3) domain. Residues Cys-207, His-342, and His-383 each act as for beta-ketoacyl synthase activity in the active site. Positions 566–876 (VFVYSGQGSQ…LAAVGVAASE (311 aa)) are acyltransferase. Ser-654 (for malonyltransferase activity) is an active-site residue. The segment at 910 to 1037 (HPLLGAHIEM…AKVEQSPREC (128 aa)) is N-terminal hotdog fold. A dehydratase region spans residues 910–1076 (HPLLGAHIEM…QHHGPAFAAL (167 aa)). The PKS/mFAS DH domain maps to 910-1198 (HPLLGAHIEM…LRRVERRAVP (289 aa)). Residue His-942 is the Proton acceptor; for dehydratase activity of the active site. The interval 1050–1198 (GTTVSPADFY…LRRVERRAVP (149 aa)) is C-terminal hotdog fold. Residue Asp-1111 is the Proton donor; for dehydratase activity of the active site. Residues 1439-1617 (ASYVVTGGLG…VINWGPWSEV (179 aa)) form a beta-ketoacyl reductase region. Position 1440–1485 (1440–1485 (SYVVTGGLGGLGLVVARWLVDRGAGRVVLGGRSDPTDEQCNVLAEL)) interacts with NADP(+). The Carrier domain occupies 1706 to 1785 (RAVTERMCAR…DLTADLMRQL (80 aa)). The residue at position 1745 (Ser-1745) is an O-(pantetheine 4'-phosphoryl)serine. Positions 1807 to 1820 (RAAARHGAAMRRRP) are enriched in basic residues. A disordered region spans residues 1807 to 1827 (RAAARHGAAMRRRPKPEVQGG).

It depends on NADP(+) as a cofactor. Pantetheine 4'-phosphate serves as cofactor.

It catalyses the reaction icosanoyl-[(phenol)carboxyphthiodiolenone synthase] + 2 (S)-methylmalonyl-CoA + 3 malonyl-CoA + 5 NADPH + 10 H(+) = C32-carboxyphthiodiolenone-[(phenol)carboxyphthiodiolenone synthase] + 5 CO2 + 5 NADP(+) + 5 CoA + 2 H2O. It carries out the reaction docosanoyl-[(phenol)carboxyphthiodiolenone synthase] + 2 (S)-methylmalonyl-CoA + 3 malonyl-CoA + 5 NADPH + 10 H(+) = C34-carboxyphthiodiolenone-[(phenol)carboxyphthiodiolenone synthase] + 5 CO2 + 5 NADP(+) + 5 CoA + 2 H2O. The catalysed reaction is 17-(4-hydroxyphenyl)heptadecanoyl-[(phenol)carboxyphthiodiolenone synthase] + 2 (S)-methylmalonyl-CoA + 3 malonyl-CoA + 5 NADPH + 10 H(+) = C35-(phenol)carboxyphthiodiolenone-[(phenol)carboxyphthiodiolenone synthase] + 5 CO2 + 5 NADP(+) + 5 CoA + 2 H2O. The enzyme catalyses 19-(4-hydroxyphenyl)nonadecanoyl-[(phenol)carboxyphthiodiolenone synthase] + 2 (S)-methylmalonyl-CoA + 3 malonyl-CoA + 5 NADPH + 10 H(+) = C37-(phenol)carboxyphthiodiolenone-[(phenol)carboxyphthiodiolenone synthase] + 5 CO2 + 5 NADP(+) + 5 CoA + 2 H2O. The protein operates within lipid metabolism; fatty acid biosynthesis. Its function is as follows. Part of the PpsABCDE complex involved in the biosynthesis of the lipid core common to phthiocerols and phenolphthiocerols by successive additions of malonyl-CoA or methylmalonyl-CoA extender units. PpsA can accept as substrate the activated forms of either icosanoyl (C20), docosanoyl (C22) or lignoceroyl (C24) groups from FadD26, or a (4-hydroxyphenyl)-C17 or (4-hydroxyphenyl)-C19 fatty acyl from FadD29. PpsA initiates the biosynthesis and extends its substrate using a malonyl-CoA extender unit. The PpsB and PpsC proteins add the second and third malonyl-CoA extender units. PpsD adds an (R)-methylmalonyl unit and PpsE adds a second (R)-methylmalonyl unit. The incorporation of the methylmalonyl units results in formation of two branched methyl groups in the elongated product. In Mycobacterium tuberculosis (strain CDC 1551 / Oshkosh), this protein is Phenolphthiocerol/phthiocerol polyketide synthase subunit C (ppsD).